The sequence spans 130 residues: RutC family protein HI_0719 (130 aa).

Cys-109 is a catalytic residue.

Belongs to the RutC family. As to quaternary structure, homotrimer.

The protein is RutC family protein HI_0719 of Haemophilus influenzae (strain ATCC 51907 / DSM 11121 / KW20 / Rd).